Here is a 528-residue protein sequence, read N- to C-terminus: GMP synthase [glutamine-hydrolyzing] (528 aa).

In terms of domain architecture, Glutamine amidotransferase type-1 spans 13-204 (AIVILDFGSQ…VYHVCGCDPD (192 aa)). Catalysis depends on Cys90, which acts as the Nucleophile. Residues His178 and Glu180 contribute to the active site. The region spanning 205–403 (WTTAAFIDEA…LGLPEEIVRR (199 aa)) is the GMPS ATP-PPase domain. 232-238 (SGGVDSS) contacts ATP.

As to quaternary structure, homodimer.

The catalysed reaction is XMP + L-glutamine + ATP + H2O = GMP + L-glutamate + AMP + diphosphate + 2 H(+). It functions in the pathway purine metabolism; GMP biosynthesis; GMP from XMP (L-Gln route): step 1/1. Catalyzes the synthesis of GMP from XMP. This is GMP synthase [glutamine-hydrolyzing] from Synechococcus sp. (strain CC9605).